An 89-amino-acid polypeptide reads, in one-letter code: Protein S100-A8 (89 aa).

The residue at position 2 (A2) is an N-acetylalanine. EF-hand domains are found at residues 13-48 and 46-81; these read IEVY…FVQN and VQNK…VGVA. Residues H17 and H27 each contribute to the Zn(2+) site. Residue D33 participates in Ca(2+) binding. At C42 the chain carries S-nitrosocysteine. Residues D59, N61, D63, and E70 each coordinate Ca(2+). Position 83 (H83) interacts with Zn(2+).

This sequence belongs to the S-100 family. In terms of assembly, homodimer. Preferentially exists as a heterodimer or heterotetramer with S100A9 known as calprotectin (S100A8/A9). S100A8 interacts with AGER, ATP2A2 and with the heterodimeric complex formed by TLR4 and LY96. Calprotectin (S100A8/9) interacts with CEACAM3 and tubulin filaments in a calcium-dependent manner. Heterotetrameric calprotectin (S100A8/A9) interacts with ANXA6 and associates with tubulin filaments in activated monocytes. S100A8 and calprotectin (S100A8/9) interact with NCF2/P67PHOX, RAC1 and RAC2. Calprotectin (S100A8/9) interacts with CYBA and CYBB. Calprotectin (S100A8/9) interacts with NOS2 to form the iNOS-S100A8/A9 transnitrosylase complex. Calprotectin (S100A8/9) interacts with CD69.

The protein resides in the secreted. It is found in the cytoplasm. Its subcellular location is the cytoskeleton. The protein localises to the cell membrane. Functionally, S100A8 is a calcium- and zinc-binding protein which plays a prominent role in the regulation of inflammatory processes and immune response. It can induce neutrophil chemotaxis and adhesion. Predominantly found as calprotectin (S100A8/A9) which has a wide plethora of intra- and extracellular functions. The intracellular functions include: facilitating leukocyte arachidonic acid trafficking and metabolism, modulation of the tubulin-dependent cytoskeleton during migration of phagocytes and activation of the neutrophilic NADPH-oxidase. Also participates in regulatory T-cell differentiation together with CD69. Activates NADPH-oxidase by facilitating the enzyme complex assembly at the cell membrane, transferring arachidonic acid, an essential cofactor, to the enzyme complex and S100A8 contributes to the enzyme assembly by directly binding to NCF2/P67PHOX. The extracellular functions involve pro-inflammatory, antimicrobial, oxidant-scavenging and apoptosis-inducing activities. Its pro-inflammatory activity includes recruitment of leukocytes, promotion of cytokine and chemokine production, and regulation of leukocyte adhesion and migration. Acts as an alarmin or a danger associated molecular pattern (DAMP) molecule and stimulates innate immune cells via binding to pattern recognition receptors such as Toll-like receptor 4 (TLR4) and receptor for advanced glycation endproducts (AGER). Binding to TLR4 and AGER activates the MAP-kinase and NF-kappa-B signaling pathways resulting in the amplification of the pro-inflammatory cascade. Has antimicrobial activity towards bacteria and fungi and exerts its antimicrobial activity probably via chelation of Zn(2+) which is essential for microbial growth. Can induce cell death via autophagy and apoptosis and this occurs through the cross-talk of mitochondria and lysosomes via reactive oxygen species (ROS) and the process involves BNIP3. Can regulate neutrophil number and apoptosis by an anti-apoptotic effect; regulates cell survival via ITGAM/ITGB and TLR4 and a signaling mechanism involving MEK-ERK. Its role as an oxidant scavenger has a protective role in preventing exaggerated tissue damage by scavenging oxidants. The iNOS-S100A8/A9 transnitrosylase complex is proposed to direct selective inflammatory stimulus-dependent S-nitrosylation of multiple targets such as GAPDH, ANXA5, EZR, MSN and VIM by recognizing a [IL]-x-C-x-x-[DE] motif; S100A8 seems to contribute to S-nitrosylation site selectivity. The polypeptide is Protein S100-A8 (S100a8) (Rattus norvegicus (Rat)).